Reading from the N-terminus, the 505-residue chain is ATP synthase subunit beta (505 aa).

The interval 1 to 25 is disordered; sequence MAKAATPKETAAVKKPAAPKKAATA. ATP is bound at residue 183-190; sequence GGAGVGKT.

This sequence belongs to the ATPase alpha/beta chains family. F-type ATPases have 2 components, CF(1) - the catalytic core - and CF(0) - the membrane proton channel. CF(1) has five subunits: alpha(3), beta(3), gamma(1), delta(1), epsilon(1). CF(0) has three main subunits: a(1), b(2) and c(9-12). The alpha and beta chains form an alternating ring which encloses part of the gamma chain. CF(1) is attached to CF(0) by a central stalk formed by the gamma and epsilon chains, while a peripheral stalk is formed by the delta and b chains.

Its subcellular location is the cell inner membrane. It catalyses the reaction ATP + H2O + 4 H(+)(in) = ADP + phosphate + 5 H(+)(out). Its function is as follows. Produces ATP from ADP in the presence of a proton gradient across the membrane. The catalytic sites are hosted primarily by the beta subunits. This chain is ATP synthase subunit beta, found in Sinorhizobium fredii (strain NBRC 101917 / NGR234).